We begin with the raw amino-acid sequence, 259 residues long: MQIALLSEDPNRQSELEAIAARWGLKHDEDNVFALVLTEQQLELRKRDEPKLGAIFVDLVSGAVAHRRKFGGGKGQSIAKAVGLNKGATPIVLDGTAGLGRDAFVLASLGCKVQMVERHPVVAALLDDGLARAKQDAEIGVWVAERMSLLHASSHDALEQLMAQDDFVQPDVVYLDPMYPHPVNKKKSALVKKEMRVFQSLVGADNDADALLAPALLMATKRVVVKRPDYAEWLDNQKPSMAIETKKNRFDVYVNAAMA.

Residues 101-102 (RD), 117-118 (ER), 153-154 (SS), and Asp176 each bind S-adenosyl-L-methionine.

The protein belongs to the methyltransferase superfamily. RsmJ family.

The protein resides in the cytoplasm. It catalyses the reaction guanosine(1516) in 16S rRNA + S-adenosyl-L-methionine = N(2)-methylguanosine(1516) in 16S rRNA + S-adenosyl-L-homocysteine + H(+). Specifically methylates the guanosine in position 1516 of 16S rRNA. This chain is Ribosomal RNA small subunit methyltransferase J, found in Aliivibrio fischeri (strain MJ11) (Vibrio fischeri).